The primary structure comprises 302 residues: O-antigen biosynthesis glycosyltransferase WbnK (302 aa).

The protein belongs to the glycosyltransferase 11 family.

It carries out the reaction beta-D-Gal-(1-&gt;3)-alpha-D-GalNAc-(1-&gt;3)-alpha-D-GalNAc-di-trans,octa-cis-undecaprenyl diphosphate + GDP-beta-L-fucose = alpha-L-Fuc-(1-&gt;2)-beta-D-Gal-(1-&gt;3)-alpha-D-GalNAc-(1-&gt;3)-alpha-D-GalNAc-di-trans,octa-cis-undecaprenyl diphosphate + GDP + H(+). It participates in bacterial outer membrane biogenesis; LPS O-antigen biosynthesis. Involved in the assembly of the O-repeating unit during O-antigen biosynthesis. In Escherichia coli, this protein is O-antigen biosynthesis glycosyltransferase WbnK.